A 134-amino-acid chain; its full sequence is Probable glycine cleavage system H protein (134 aa).

The Lipoyl-binding domain occupies 29–110 (TVLVGITDYA…PYENWIAKLK (82 aa)). Position 70 is an N6-lipoyllysine (Lys70).

This sequence belongs to the GcvH family. In terms of assembly, the glycine cleavage system is composed of four proteins: P, T, L and H. (R)-lipoate is required as a cofactor.

Its function is as follows. The glycine cleavage system catalyzes the degradation of glycine. The H protein shuttles the methylamine group of glycine from the P protein to the T protein. The protein is Probable glycine cleavage system H protein of Thermococcus gammatolerans (strain DSM 15229 / JCM 11827 / EJ3).